Consider the following 194-residue polypeptide: Nucleoside triphosphate pyrophosphatase (194 aa).

The active-site Proton acceptor is the Asp71.

Belongs to the Maf family. A divalent metal cation serves as cofactor.

Its subcellular location is the cytoplasm. It carries out the reaction a ribonucleoside 5'-triphosphate + H2O = a ribonucleoside 5'-phosphate + diphosphate + H(+). It catalyses the reaction a 2'-deoxyribonucleoside 5'-triphosphate + H2O = a 2'-deoxyribonucleoside 5'-phosphate + diphosphate + H(+). Functionally, nucleoside triphosphate pyrophosphatase. May have a dual role in cell division arrest and in preventing the incorporation of modified nucleotides into cellular nucleic acids. The sequence is that of Nucleoside triphosphate pyrophosphatase from Paramagnetospirillum magneticum (strain ATCC 700264 / AMB-1) (Magnetospirillum magneticum).